A 313-amino-acid polypeptide reads, in one-letter code: Myeloma-overexpressed gene protein (313 aa).

Residues Glu-107 to Asp-129 are disordered.

The protein is Myeloma-overexpressed gene protein (MYEOV) of Homo sapiens (Human).